The chain runs to 2705 residues: Teneurin-1 (2705 aa).

Disordered stretches follow at residues 1–73 (MEQM…STQD) and 135–222 (CLSS…TQDS). The Teneurin N-terminal domain occupies 1–299 (MEQMDCKPYQ…KPYRCCNWKC (299 aa)). Residues 1 to 305 (MEQMDCKPYQ…NWKCTALSAT (305 aa)) lie on the Cytoplasmic side of the membrane. The segment covering 32 to 46 (DGRKQRQSYDSRETL) has biased composition (basic and acidic residues). A Nuclear localization signal (NLS) motif is present at residues 62–65 (RKRK). A compositionally biased stretch (polar residues) spans 135 to 147 (CLSSRANSALSLT). Basic and acidic residues predominate over residues 148-157 (DTDHERKSDG). Over residues 173-182 (PLPPPPPPPH) the composition is skewed to pro residues. Positions 271–278 (PPPRPLPR) match the Required for interaction with SORBS1 (Ten-1 ICD form) motif. Residues 306-326 (AITVTLALLLAYVIAVHLFGL) traverse the membrane as a helical segment. At 327–2705 (TWQLQPVEGQ…FMRQSEIGRR (2379 aa)) the chain is on the extracellular side. N-linked (GlcNAc...) asparagine glycosylation occurs at Asn-414. EGF-like domains lie at 509–540 (VLDDCSTNCNGNGECISGHCHCFPGFLGPDCA), 541–572 (KDSCPVLCSGNGEYEKGHCVCRNGWKGPECDV), 573–605 (PEEQCIDPTCFGHGTCIMGVCICVPGYKGEICE), 606–638 (EEDCLDPMCSGHGVCVQGECHCSAGWGGVNCET), 639–672 (SLPICQEHCSGHGTFLLDVGLCSCEPQWTGSDCS), 673–702 (TELCTLDCGSHGVCSRGICQCEEGWVGPTC), 703–734 (EERTCHSHCAEHGQCKDGKCECSPGWEGDHCT), and 735–769 (IDGCPGLCYGNGRCTLDQNGWHCVCQVGWSGSGCN). Disulfide bonds link Cys-513/Cys-523, Cys-517/Cys-528, Cys-530/Cys-539, Cys-548/Cys-559, Cys-561/Cys-570, Cys-577/Cys-588, Cys-582/Cys-593, Cys-595/Cys-604, Cys-609/Cys-620, Cys-614/Cys-625, Cys-627/Cys-636, Cys-647/Cys-660, Cys-662/Cys-671, Cys-676/Cys-686, Cys-680/Cys-691, Cys-693/Cys-702, Cys-707/Cys-717, Cys-711/Cys-722, Cys-724/Cys-733, Cys-738/Cys-748, Cys-742/Cys-757, and Cys-759/Cys-768. Residues Asn-878 and Asn-1057 are each glycosylated (N-linked (GlcNAc...) asparagine). 5 NHL repeats span residues 1167–1192 (LFAPVALTSGPDGSVYIGDFNFVRRI), 1202–1246 (LELR…AKSL), 1272–1316 (SHCG…NGMI), 1331–1382 (LSCD…IAGR), and 1461–1504 (CFSG…VSRN). A YD 1 repeat occupies 1514–1533 (YEIASPADQELYQFTINGTH). Residues Asn-1530 and Asn-1547 are each glycosylated (N-linked (GlcNAc...) asparagine). YD repeat units follow at residues 1550-1570 (YSGEGDVATITSSNGNSVHIR), 1588-1612 (YWLTISSNGVLKRVYAQGYNLALMT), 1613-1634 (YPGNTGLLATKSDENGWTTVYE), and 1635-1655 (YDSDGHLTNATFPTGEVSSFH). 5 N-linked (GlcNAc...) asparagine glycosylation sites follow: Asn-1643, Asn-1679, Asn-1737, Asn-1761, and Asn-1822. YD repeat units lie at residues 1825 to 1844 (YSHSGLVTYIQRGTWTEKME), 1845 to 1865 (YDPSGNIISRTWADGKIWSYT), 1866 to 1884 (YLEKSVMLLLHSQRRYIFE), 1885 to 1905 (YDQSDYLLSVTMPSMVRHALQ), 1913 to 1929 (YRNIYTPPDSGAAFIQD), 1930 to 1949 (VTRDGRLLQTLYPGTGRRVL), 1950 to 1969 (YKYSKQSRLSEILYDTTQVT), 1972 to 1992 (YEESSGVIKTIHLMHDGFICT), 1995 to 2015 (YRQTGPLIGRQIFRFSEEGLV), 2065 to 2085 (YDLNQVITTTVMKHTKIFSAN), and 2093 to 2113 (YEILKSIAYWMTIQYDNMGRM). The N-linked (GlcNAc...) asparagine glycan is linked to Asn-2125. YD repeat units lie at residues 2133–2153 (YDRDGQLQTVSVNDKTQWRYS), 2154–2174 (YDLNGNINLLSHGNSARLTPL), 2176–2196 (YDLRDRITRLGEIQYKMDEDG), 2208–2228 (YNSNGLLNKAYNKVSGWTVQY), and 2230–2250 (YDGLGRRVASKSSLGQHLQFF). An N-linked (GlcNAc...) asparagine glycan is attached at Asn-2265. YD repeat units lie at residues 2276–2293 (YDLQGHLIAMELSSGEEY) and 2294–2317 (YVACDNTGTPLAVFSSRGQVIKEI). Residue Asn-2582 is glycosylated (N-linked (GlcNAc...) asparagine).

The protein belongs to the tenascin family. Teneurin subfamily. In terms of assembly, homodimer; disulfide-linked. Heterodimer with other teneurins. Ten-1 ICD interacts with SORBS1 (via third SH3 domain). Interacts with MBD1 isoform 2. Derives from the plasma membrane form by proteolytic processing. Further proteolytic cleavage may be generated. In terms of processing, derives from the plasma membrane form by proteolytic cleavage and translocates to the nucleus. In terms of tissue distribution, expressed in the neurons of the developing visual system and in fetal brain.

It is found in the cell membrane. The protein resides in the nucleus. It localises to the nucleus speckle. The protein localises to the nucleus matrix. Its subcellular location is the cytoplasm. It is found in the cytoskeleton. Involved in neural development, regulating the establishment of proper connectivity within the nervous system. May function as a cellular signal transducer. Functionally, plays a role in the regulation of neuroplasticity in the limbic system. Mediates a rapid reorganization of actin- and tubulin-based cytoskeleton elements with an increase in dendritic arborization and spine density formation of neurons in the hippocampus and amygdala. Induces BDNF transcription inhibition in neurons. Activates the mitogen-activated protein (MAP) kinase 2 (MEK2) and extracellular signal-regulated kinase (ERK) cascade. Its function is as follows. Induces gene transcription activation. This chain is Teneurin-1 (TENM1), found in Gallus gallus (Chicken).